The chain runs to 281 residues: Bifunctional protein FolD (281 aa).

Residues 165-167 (GRG), Thr-192, and Val-233 each bind NADP(+).

The protein belongs to the tetrahydrofolate dehydrogenase/cyclohydrolase family. Homodimer.

It catalyses the reaction (6R)-5,10-methylene-5,6,7,8-tetrahydrofolate + NADP(+) = (6R)-5,10-methenyltetrahydrofolate + NADPH. The enzyme catalyses (6R)-5,10-methenyltetrahydrofolate + H2O = (6R)-10-formyltetrahydrofolate + H(+). It participates in one-carbon metabolism; tetrahydrofolate interconversion. Functionally, catalyzes the oxidation of 5,10-methylenetetrahydrofolate to 5,10-methenyltetrahydrofolate and then the hydrolysis of 5,10-methenyltetrahydrofolate to 10-formyltetrahydrofolate. This Mycobacterium bovis (strain BCG / Tokyo 172 / ATCC 35737 / TMC 1019) protein is Bifunctional protein FolD.